The chain runs to 497 residues: Probable malate:quinone oxidoreductase (497 aa).

It belongs to the MQO family. The cofactor is FAD.

The enzyme catalyses (S)-malate + a quinone = a quinol + oxaloacetate. It participates in carbohydrate metabolism; tricarboxylic acid cycle; oxaloacetate from (S)-malate (quinone route): step 1/1. This is Probable malate:quinone oxidoreductase from Prochlorococcus marinus (strain MIT 9515).